The following is a 127-amino-acid chain: MNFSGKYQVQSQENFEAFMKAVGLPDELIQKGKDIKGTSEIVQNGKHFKLTITTGSKVVQNEFTLGEECEMETLTGEKVKTVVQLEGDNKLVTTFKGIKSVTELNGDIITSTMTLGDIVFKRISKRI.

An N-acetylmethionine modification is found at methionine 1. Serine 11 is modified (phosphoserine). N6-succinyllysine is present on residues lysine 31 and lysine 36. Serine 39 is subject to Phosphoserine. N6-succinyllysine is present on lysine 46. Position 51 is a phosphothreonine (threonine 51). Position 56 is a phosphoserine (serine 56). Residues lysine 57, lysine 78, and lysine 90 each carry the N6-succinyllysine modification. Serine 100 carries the post-translational modification Phosphoserine. Position 121 is an N6-succinyllysine (lysine 121).

The protein belongs to the calycin superfamily. Fatty-acid binding protein (FABP) family. As to quaternary structure, monomer.

It localises to the cytoplasm. Its function is as follows. Plays a role in lipoprotein-mediated cholesterol uptake in hepatocytes. Binds cholesterol. Binds free fatty acids and their coenzyme A derivatives, bilirubin, and some other small molecules in the cytoplasm. May be involved in intracellular lipid transport. The protein is Fatty acid-binding protein, liver (FABP1) of Sus scrofa (Pig).